A 359-amino-acid chain; its full sequence is Guanine nucleotide-binding protein G(q) subunit alpha (359 aa).

2 S-palmitoyl cysteine lipidation sites follow: C9 and C10. The G-alpha domain occupies 38-359 (RELKLLLLGT…QLNLKEYNLV (322 aa)). A G1 motif region spans residues 41-54 (KLLLLGTGESGKST). Residues S50, G51, K52, S53, T54, S156, L180, R181, and R183 each contribute to the GTP site. Mg(2+) is bound at residue S53. The segment at 178-186 (DVLRVRVPT) is G2 motif. T186 contributes to the Mg(2+) binding site. Residues 201–210 (FRMVDVGGQR) are G3 motif. The residue at position 209 (Q209) is a 5-glutamyl histamine. Positions 270–277 (ILFLNKKD) are G4 motif. The GTP site is built by N274, K275, D277, and A331. The tract at residues 329-334 (TCATDT) is G5 motif.

The protein belongs to the G-alpha family. G(q) subfamily. G proteins are composed of 3 units; alpha, beta and gamma. The alpha chain contains the guanine nucleotide binding site. Interacts (GDP-bound form) with RIC8A (via C-terminus); promoting GNAQ folding and association with the plasma membrane. Binds NHERF1. Forms a complex with PECAM1 and BDKRB2. Interacts with GAS2L2. Post-translationally, palmitoylated by ZDHHC3 and ZDHHC7. Palmitoylation occurs in the Golgi and participates in the localization of GNAQ to the plasma membrane. Histaminylated at Gln-209 residues by TGM2.

Its subcellular location is the cell membrane. It is found in the golgi apparatus. The protein localises to the nucleus. It localises to the nucleus membrane. It catalyses the reaction GTP + H2O = GDP + phosphate + H(+). Functionally, guanine nucleotide-binding proteins (G proteins) function as transducers downstream of G protein-coupled receptors (GPCRs) in numerous signaling cascades. The alpha chain contains the guanine nucleotide binding site and alternates between an active, GTP-bound state and an inactive, GDP-bound state. Signaling by an activated GPCR promotes GDP release and GTP binding. The alpha subunit has a low GTPase activity that converts bound GTP to GDP, thereby terminating the signal. Both GDP release and GTP hydrolysis are modulated by numerous regulatory proteins. Signaling is mediated via phospholipase C-beta-dependent inositol lipid hydrolysis for signal propagation: activates phospholipase C-beta: following GPCR activation, GNAQ activates PLC-beta (PLCB1, PLCB2, PLCB3 or PLCB4), leading to production of diacylglycerol (DAG) and inositol 1,4,5-trisphosphate (IP3). Required for platelet activation. Regulates B-cell selection and survival and is required to prevent B-cell-dependent autoimmunity. Regulates chemotaxis of BM-derived neutrophils and dendritic cells (in vitro). Transduces FFAR4 signaling in response to long-chain fatty acids (LCFAs). Together with GNA11, required for heart development. In Mus musculus (Mouse), this protein is Guanine nucleotide-binding protein G(q) subunit alpha (Gnaq).